A 1121-amino-acid polypeptide reads, in one-letter code: Piwi-like protein ergo-1 (1121 aa).

Residues Met-1–Tyr-14 are compositionally biased toward gly residues. The interval Met-1 to Val-134 is disordered. Composition is skewed to basic and acidic residues over residues Arg-15 to Asn-29 and Tyr-40 to Gly-77. Residues Gly-99–Gly-112 are compositionally biased toward polar residues. Gly residues predominate over residues Gly-125–Val-134. In terms of domain architecture, PAZ spans Val-426 to Val-534. One can recognise a Piwi domain in the interval Asn-774–Asp-1081.

It belongs to the argonaute family. Piwi subfamily. In terms of assembly, interacts with rde-12. Interacts with rde-10. In terms of tissue distribution, highly expressed in the germline in hermaphrodites.

The protein localises to the cytoplasm. In terms of biological role, argonaute protein required for gene silencing in the endogenous RNA interference (RNAi) pathway. Involved in the 26G RNAi pathway and associates with both unmethylated and methylated 26G small interfering RNAs (26G-siRNAs), which are a class of 26 nucleotide siRNAs that possess a guanine residue at the 5'-end. Associated 26G-siRNAs are methylated by the methyltransferase henn-1, which stabilizes the siRNAs. Association with 26G-siRNAs is required for the biogenesis of secondary 22G-siRNAs (a class of 22 nucleotide siRNAs that possess a triphosphorylated guanine residue at the 5'-end). May be involved in passenger strand cleavage of target 26G-siRNAs. This Caenorhabditis elegans protein is Piwi-like protein ergo-1.